A 512-amino-acid polypeptide reads, in one-letter code: Spermatocyte protein spe-8 (512 aa).

A disordered region spans residues 1–85 (MRSKSSEGDL…PKPSSDNNNS (85 aa)). Residues 15 to 41 (TQSREDKETTATYSEDTKPETQKERNA) show a composition bias toward basic and acidic residues. A compositionally biased stretch (pro residues) spans 68-78 (EAPPPPPPPKP). Residues 114–205 (FYHGFMGRNE…YEGMTLICGL (92 aa)) enclose the SH2 domain. The Protein kinase domain maps to 217–485 (VTLNKKLGEG…KEEVGFHEIE (269 aa)). ATP is bound by residues 223–231 (LGEGQFGEV) and Lys-250. Asp-344 functions as the Proton acceptor in the catalytic mechanism.

It belongs to the protein kinase superfamily. Tyr protein kinase family. Fes/fps subfamily. Expression is restricted to male germline.

Its subcellular location is the cell membrane. It localises to the cytoplasm. It catalyses the reaction L-tyrosyl-[protein] + ATP = O-phospho-L-tyrosyl-[protein] + ADP + H(+). In terms of biological role, probable non-receptor tyrosine-protein kinase which plays a role in spermatid activation (spermiogenesis) in hermaphrodites. This Caenorhabditis elegans protein is Spermatocyte protein spe-8.